The chain runs to 103 residues: Large ribosomal subunit protein bL21 (103 aa).

The protein belongs to the bacterial ribosomal protein bL21 family. In terms of assembly, part of the 50S ribosomal subunit. Contacts protein L20.

Its function is as follows. This protein binds to 23S rRNA in the presence of protein L20. In Legionella pneumophila (strain Lens), this protein is Large ribosomal subunit protein bL21.